We begin with the raw amino-acid sequence, 537 residues long: CTP synthase (537 aa).

Residues 1 to 268 form an amidoligase domain region; the sequence is MGETKYIFVT…DSTILEKMGL (268 aa). S15 serves as a coordination point for CTP. S15 lines the UTP pocket. 16-21 lines the ATP pocket; that stretch reads SLGKGI. Residue Y56 coordinates L-glutamine. Residue D73 participates in ATP binding. Residues D73 and E143 each contribute to the Mg(2+) site. Residues 150–152, 189–194, and K225 each bind CTP; these read DIE and KTKPTQ. UTP contacts are provided by residues 189 to 194 and K225; that span reads KTKPTQ. Residues 296–537 enclose the Glutamine amidotransferase type-1 domain; it reads NIALVGKYDL…VKAAIENEKN (242 aa). G357 serves as a coordination point for L-glutamine. C384 acts as the Nucleophile; for glutamine hydrolysis in catalysis. L-glutamine contacts are provided by residues 385–388, E408, and R465; that span reads LGMQ. Residues H510 and E512 contribute to the active site.

This sequence belongs to the CTP synthase family. In terms of assembly, homotetramer.

It carries out the reaction UTP + L-glutamine + ATP + H2O = CTP + L-glutamate + ADP + phosphate + 2 H(+). The enzyme catalyses L-glutamine + H2O = L-glutamate + NH4(+). The catalysed reaction is UTP + NH4(+) + ATP = CTP + ADP + phosphate + 2 H(+). It participates in pyrimidine metabolism; CTP biosynthesis via de novo pathway; CTP from UDP: step 2/2. Its activity is regulated as follows. Allosterically activated by GTP, when glutamine is the substrate; GTP has no effect on the reaction when ammonia is the substrate. The allosteric effector GTP functions by stabilizing the protein conformation that binds the tetrahedral intermediate(s) formed during glutamine hydrolysis. Inhibited by the product CTP, via allosteric rather than competitive inhibition. In terms of biological role, catalyzes the ATP-dependent amination of UTP to CTP with either L-glutamine or ammonia as the source of nitrogen. Regulates intracellular CTP levels through interactions with the four ribonucleotide triphosphates. This Bacteroides thetaiotaomicron (strain ATCC 29148 / DSM 2079 / JCM 5827 / CCUG 10774 / NCTC 10582 / VPI-5482 / E50) protein is CTP synthase.